The chain runs to 236 residues: 5'-methylthioadenosine/S-adenosylhomocysteine nucleosidase (236 aa).

Residue Glu12 is the Proton acceptor of the active site. Substrate-binding positions include Gly78, Ile153, and 174–175; that span reads ME. Asp198 (proton donor) is an active-site residue.

Belongs to the PNP/UDP phosphorylase family. MtnN subfamily.

It carries out the reaction S-adenosyl-L-homocysteine + H2O = S-(5-deoxy-D-ribos-5-yl)-L-homocysteine + adenine. The enzyme catalyses S-methyl-5'-thioadenosine + H2O = 5-(methylsulfanyl)-D-ribose + adenine. It catalyses the reaction 5'-deoxyadenosine + H2O = 5-deoxy-D-ribose + adenine. It participates in amino-acid biosynthesis; L-methionine biosynthesis via salvage pathway; S-methyl-5-thio-alpha-D-ribose 1-phosphate from S-methyl-5'-thioadenosine (hydrolase route): step 1/2. Catalyzes the irreversible cleavage of the glycosidic bond in both 5'-methylthioadenosine (MTA) and S-adenosylhomocysteine (SAH/AdoHcy) to adenine and the corresponding thioribose, 5'-methylthioribose and S-ribosylhomocysteine, respectively. Also cleaves 5'-deoxyadenosine, a toxic by-product of radical S-adenosylmethionine (SAM) enzymes, into 5-deoxyribose and adenine. This is 5'-methylthioadenosine/S-adenosylhomocysteine nucleosidase from Shewanella sp. (strain MR-7).